The following is a 361-amino-acid chain: Glutamate 5-kinase (361 aa).

Lys-14 provides a ligand contact to ATP. 3 residues coordinate substrate: Ser-54, Asp-141, and Asn-153. Residues 277–355 (KGAVIINQGA…KGLKPVIHYD (79 aa)) form the PUA domain.

It belongs to the glutamate 5-kinase family.

It localises to the cytoplasm. It carries out the reaction L-glutamate + ATP = L-glutamyl 5-phosphate + ADP. It participates in amino-acid biosynthesis; L-proline biosynthesis; L-glutamate 5-semialdehyde from L-glutamate: step 1/2. Functionally, catalyzes the transfer of a phosphate group to glutamate to form L-glutamate 5-phosphate. The polypeptide is Glutamate 5-kinase (Chlorobaculum tepidum (strain ATCC 49652 / DSM 12025 / NBRC 103806 / TLS) (Chlorobium tepidum)).